Here is a 234-residue protein sequence, read N- to C-terminus: Purine nucleoside phosphorylase DeoD-type (234 aa).

Residue H4 participates in a purine D-ribonucleoside binding. Phosphate contacts are provided by residues G20, R24, R43, and 87 to 90; that span reads RIGS. A purine D-ribonucleoside is bound by residues 179-181 and 203-204; these read DME and SD. D204 functions as the Proton donor in the catalytic mechanism.

This sequence belongs to the PNP/UDP phosphorylase family. Homohexamer; trimer of homodimers.

It carries out the reaction a purine D-ribonucleoside + phosphate = a purine nucleobase + alpha-D-ribose 1-phosphate. It catalyses the reaction a purine 2'-deoxy-D-ribonucleoside + phosphate = a purine nucleobase + 2-deoxy-alpha-D-ribose 1-phosphate. In terms of biological role, catalyzes the reversible phosphorolytic breakdown of the N-glycosidic bond in the beta-(deoxy)ribonucleoside molecules, with the formation of the corresponding free purine bases and pentose-1-phosphate. The protein is Purine nucleoside phosphorylase DeoD-type of Shewanella oneidensis (strain ATCC 700550 / JCM 31522 / CIP 106686 / LMG 19005 / NCIMB 14063 / MR-1).